Consider the following 480-residue polypeptide: 6-phosphogluconate dehydrogenase, decarboxylating (480 aa).

NADP(+)-binding positions include 11-16, 34-36, 76-78, and asparagine 104; these read GLAVMG, NRS, and IKA. Residues asparagine 104 and 130-132 contribute to the substrate site; that span reads SGG. Lysine 184 (proton acceptor) is an active-site residue. 187 to 188 is a binding site for substrate; that stretch reads HN. Glutamate 191 acts as the Proton donor in catalysis. Residues tyrosine 192, lysine 261, arginine 288, arginine 448, and histidine 454 each contribute to the substrate site.

It belongs to the 6-phosphogluconate dehydrogenase family. As to quaternary structure, homodimer.

It carries out the reaction 6-phospho-D-gluconate + NADP(+) = D-ribulose 5-phosphate + CO2 + NADPH. It participates in carbohydrate degradation; pentose phosphate pathway; D-ribulose 5-phosphate from D-glucose 6-phosphate (oxidative stage): step 3/3. Catalyzes the oxidative decarboxylation of 6-phosphogluconate to ribulose 5-phosphate and CO(2), with concomitant reduction of NADP to NADPH. This is 6-phosphogluconate dehydrogenase, decarboxylating (gnd) from Chlamydia trachomatis serovar D (strain ATCC VR-885 / DSM 19411 / UW-3/Cx).